We begin with the raw amino-acid sequence, 461 residues long: Fumarate hydratase class II (461 aa).

Residues 99 to 101 (SGT), 130 to 133 (HPND), 140 to 142 (STN), and Thr-188 each bind substrate. His-189 acts as the Proton donor/acceptor in catalysis. Ser-319 is an active-site residue. Substrate is bound by residues Ser-320 and 325–327 (KVN).

The protein belongs to the class-II fumarase/aspartase family. Fumarase subfamily. Homotetramer.

Its subcellular location is the cytoplasm. It carries out the reaction (S)-malate = fumarate + H2O. Its pathway is carbohydrate metabolism; tricarboxylic acid cycle; (S)-malate from fumarate: step 1/1. Its function is as follows. Involved in the TCA cycle. Catalyzes the stereospecific interconversion of fumarate to L-malate. The chain is Fumarate hydratase class II from Prochlorococcus marinus subsp. pastoris (strain CCMP1986 / NIES-2087 / MED4).